The chain runs to 88 residues: Elongation factor 1-beta (88 aa).

The protein belongs to the EF-1-beta/EF-1-delta family.

In terms of biological role, promotes the exchange of GDP for GTP in EF-1-alpha/GDP, thus allowing the regeneration of EF-1-alpha/GTP that could then be used to form the ternary complex EF-1-alpha/GTP/AAtRNA. In Haloarcula marismortui (strain ATCC 43049 / DSM 3752 / JCM 8966 / VKM B-1809) (Halobacterium marismortui), this protein is Elongation factor 1-beta.